We begin with the raw amino-acid sequence, 468 residues long: UDP-N-acetylmuramoyl-L-alanine--L-glutamate ligase (468 aa).

122-128 provides a ligand contact to ATP; that stretch reads GTKGKST.

Belongs to the MurCDEF family. MurD2 subfamily.

Its subcellular location is the cytoplasm. It carries out the reaction UDP-N-acetyl-alpha-D-muramoyl-L-alanine + L-glutamate + ATP = UDP-N-acetyl-alpha-D-muramoyl-L-alanyl-L-glutamate + ADP + phosphate + H(+). The protein operates within cell wall biogenesis; peptidoglycan biosynthesis. In terms of biological role, cell wall formation. Catalyzes the addition of L-glutamate to the nucleotide precursor UDP-N-acetylmuramoyl-L-alanine. The protein is UDP-N-acetylmuramoyl-L-alanine--L-glutamate ligase of Xanthomonas campestris pv. campestris (strain 8004).